The primary structure comprises 250 residues: Functional amyloid subunit FapC (250 aa).

The N-terminal stretch at 1 to 24 (MKPTMALKPLVFALAALMAVAAQA) is a signal peptide. Residues 62 to 95 (NNAGANGSLSNSKGNLGANIAAGSGNQQDNAAAI) form a FapC_R1 repeat. Positions 96–126 (TSSAGDAATVFAVADIYQESKDNKFTNKGTQ) are linker 1. A FapC_R2 repeat occupies 127 to 160 (NNALLNNSANNSSGNVGVNVAAGQGNQQKNNLAI). Residues 161–199 (VTADGKNVAAASNTEQVSLDNHFLNEASSKHSYKPQYVV) are linker 2. A FapC_R3 repeat occupies 200 to 233 (NNAGLLNSANNASGNIGVNVAAGAGNQQSNTLTL). Residues 237-240 (CTVC) carry the Cys-X-X-Cys motif.

It belongs to the FapB/FapC family. In terms of assembly, the major component of purified amyloid fibrils. Forms fibrils in vitro; in the presence of FapA the fibrils are about 50% wider. Interacts with FapA. Fibrillates in vitro; this is inhibited by FapA. Fibrils are resistant to boiling in 2% (weight/vol) SDS and require &gt;90% (vol/vol) formic acid to dissolve.

The protein resides in the fimbrium. The protein localises to the secreted. Functionally, the major functional amyloid subunit in this bacterium. Intrinsically disordered in its monomeric state. Upon overexpression of the endogenous six-gene locus (fapA-fapF) in situ, cells form large clumps during liquid growth, make large amounts of biofilm and produce amyloid fibrils. Expression of the 6 gene operon in E.coli strain BL21(DE3) induces flocculation and biofilm formation with copious extracellular fibrils. This Pseudomonas fluorescens protein is Functional amyloid subunit FapC.